Reading from the N-terminus, the 906-residue chain is NADH-quinone oxidoreductase subunit G (906 aa).

Positions 2-83 (AKIYVDSKIY…GAIISIKSTE (82 aa)) constitute a 2Fe-2S ferredoxin-type domain. [2Fe-2S] cluster is bound by residues Cys-34, Cys-45, Cys-48, and Cys-67. The 40-residue stretch at 83–122 (ESEVFRSAIVELLLTNHPHDCPVCEEGGHCHLQDMTVMVK) folds into the 4Fe-4S His(Cys)3-ligated-type domain. Residues His-99, Cys-103, Cys-106, Cys-112, Cys-151, Cys-154, Cys-157, Cys-201, Cys-228, Cys-231, Cys-235, and Cys-263 each coordinate [4Fe-4S] cluster. A 4Fe-4S Mo/W bis-MGD-type domain is found at 221–277 (MQYAPGICHNCSVGCNISIGERYGEIRRIENRYHENINHYLICDLGRFGYSHTNLNT).

It belongs to the complex I 75 kDa subunit family. Composed of 13 different subunits. Subunits NuoCD, E, F, and G constitute the peripheral sector of the complex. Requires [2Fe-2S] cluster as cofactor. [4Fe-4S] cluster is required as a cofactor.

It carries out the reaction a quinone + NADH + 5 H(+)(in) = a quinol + NAD(+) + 4 H(+)(out). Its function is as follows. NDH-1 shuttles electrons from NADH, via FMN and iron-sulfur (Fe-S) centers, to quinones in the respiratory chain. Couples the redox reaction to proton translocation (for every two electrons transferred, four hydrogen ions are translocated across the cytoplasmic membrane), and thus conserves the redox energy in a proton gradient. The polypeptide is NADH-quinone oxidoreductase subunit G (nuoG) (Buchnera aphidicola subsp. Acyrthosiphon pisum (strain APS) (Acyrthosiphon pisum symbiotic bacterium)).